The primary structure comprises 278 residues: Formamidopyrimidine-DNA glycosylase (278 aa).

Catalysis depends on P2, which acts as the Schiff-base intermediate with DNA. E3 acts as the Proton donor in catalysis. K60 serves as the catalytic Proton donor; for beta-elimination activity. DNA is bound by residues H95 and R114. Residues 244-278 (WVYRRGGEPCRRCGTIIRRDKLSGRSTHWCPTCQG) form an FPG-type zinc finger. R268 functions as the Proton donor; for delta-elimination activity in the catalytic mechanism.

The protein belongs to the FPG family. As to quaternary structure, monomer. The cofactor is Zn(2+).

The catalysed reaction is Hydrolysis of DNA containing ring-opened 7-methylguanine residues, releasing 2,6-diamino-4-hydroxy-5-(N-methyl)formamidopyrimidine.. It carries out the reaction 2'-deoxyribonucleotide-(2'-deoxyribose 5'-phosphate)-2'-deoxyribonucleotide-DNA = a 3'-end 2'-deoxyribonucleotide-(2,3-dehydro-2,3-deoxyribose 5'-phosphate)-DNA + a 5'-end 5'-phospho-2'-deoxyribonucleoside-DNA + H(+). Functionally, involved in base excision repair of DNA damaged by oxidation or by mutagenic agents. Acts as a DNA glycosylase that recognizes and removes damaged bases. Has a preference for oxidized purines, such as 7,8-dihydro-8-oxoguanine (8-oxoG). Has AP (apurinic/apyrimidinic) lyase activity and introduces nicks in the DNA strand. Cleaves the DNA backbone by beta-delta elimination to generate a single-strand break at the site of the removed base with both 3'- and 5'-phosphates. The chain is Formamidopyrimidine-DNA glycosylase from Parasynechococcus marenigrum (strain WH8102).